Here is a 264-residue protein sequence, read N- to C-terminus: Thymidylate synthase (264 aa).

DUMP is bound at residue Arg21. His51 serves as a coordination point for (6R)-5,10-methylene-5,6,7,8-tetrahydrofolate. DUMP is bound at residue 126–127; sequence RR. Cys146 serves as the catalytic Nucleophile. DUMP-binding positions include 166-169, Asn177, and 207-209; these read RSAD and HLY. Asp169 contributes to the (6R)-5,10-methylene-5,6,7,8-tetrahydrofolate binding site. Ala263 serves as a coordination point for (6R)-5,10-methylene-5,6,7,8-tetrahydrofolate.

Belongs to the thymidylate synthase family. Bacterial-type ThyA subfamily. In terms of assembly, homodimer.

The protein localises to the cytoplasm. The enzyme catalyses dUMP + (6R)-5,10-methylene-5,6,7,8-tetrahydrofolate = 7,8-dihydrofolate + dTMP. It functions in the pathway pyrimidine metabolism; dTTP biosynthesis. Functionally, catalyzes the reductive methylation of 2'-deoxyuridine-5'-monophosphate (dUMP) to 2'-deoxythymidine-5'-monophosphate (dTMP) while utilizing 5,10-methylenetetrahydrofolate (mTHF) as the methyl donor and reductant in the reaction, yielding dihydrofolate (DHF) as a by-product. This enzymatic reaction provides an intracellular de novo source of dTMP, an essential precursor for DNA biosynthesis. The chain is Thymidylate synthase from Rhizobium etli (strain ATCC 51251 / DSM 11541 / JCM 21823 / NBRC 15573 / CFN 42).